A 186-amino-acid polypeptide reads, in one-letter code: Peptide deformylase (186 aa).

Cysteine 94 and histidine 136 together coordinate Fe cation. The active site involves glutamate 137. Histidine 140 provides a ligand contact to Fe cation.

This sequence belongs to the polypeptide deformylase family. Fe(2+) is required as a cofactor.

The enzyme catalyses N-terminal N-formyl-L-methionyl-[peptide] + H2O = N-terminal L-methionyl-[peptide] + formate. Its function is as follows. Removes the formyl group from the N-terminal Met of newly synthesized proteins. Requires at least a dipeptide for an efficient rate of reaction. N-terminal L-methionine is a prerequisite for activity but the enzyme has broad specificity at other positions. In Prosthecochloris aestuarii (strain DSM 271 / SK 413), this protein is Peptide deformylase.